Consider the following 260-residue polypeptide: OCIA domain-containing protein 1 (260 aa).

The 110-residue stretch at 1 to 110 (MDSPLSDGSR…MRLPNSRLGE (110 aa)) folds into the OCIA domain. Positions 146–260 (DVYTDEGLNP…KNKYGDSWQD (115 aa)) are disordered. The span at 155–164 (PSRSTALNLD) shows a compositional bias: polar residues. Residues 205-215 (EDLRKKNREGY) show a composition bias toward basic and acidic residues.

The protein belongs to the OCIAD1 family.

In Drosophila pseudoobscura pseudoobscura (Fruit fly), this protein is OCIA domain-containing protein 1.